The following is a 1050-amino-acid chain: uncharacterized protein (1050 aa).

Over 1–83 (MARLLTKSSQ…AVKLGTFEGC (83 aa)) the chain is Cytoplasmic. A phosphoserine mark is found at Ser9 and Ser60. Phosphothreonine is present on Thr64. The chain crosses the membrane as a helical span at residues 84–104 (FIPTTLNVLSILLYLRFPWII). At 105 to 112 (GEAGVLKT) the chain is on the extracellular side. A helical membrane pass occupies residues 113–133 (LLMLFISYAVGIFTSLSISAI). Residues 134–146 (CTNGMVRGGGAYY) are Cytoplasmic-facing. A helical transmembrane segment spans residues 147-169 (AVSRSIGPELGGSIGLIFYVGQI). Topologically, residues 170–202 (LNTGMNISGFVEPIISIFGKESGTISQFLPEGY) are extracellular. N-linked (GlcNAc...) asparagine glycosylation is present at Asn175. Residues 203–223 (WWVFLYTTCVLAMCCILCCLG) traverse the membrane as a helical segment. Residues 224–232 (SAIFAKASN) are Cytoplasmic-facing. The chain crosses the membrane as a helical span at residues 233–253 (ALFVVIILSTISIPISSIFVH). The Extracellular segment spans residues 254 to 295 (PFKDPSLLVHFTGLKWSTLMKNLASAYTENEKGTGYESFKST). Position 270 is a phosphoserine (Ser270). Thr271 is subject to Phosphothreonine. A helical membrane pass occupies residues 296–316 (FGVFFPATAGLLAGASMSGDL). The Cytoplasmic segment spans residues 317-334 (KAPSRSIPKGTISSQATT). Residues 335–355 (FLLYLLVILCVGASVTRTGLL) traverse the membrane as a helical segment. At 356 to 368 (LDMDVMEHISLHP) the chain is on the extracellular side. A helical membrane pass occupies residues 369–389 (LFIISGILSSGAFSSFMGIFG). Residues 390 to 417 (AAKLLQAIARDDLIPGMFFFAKGSSYDD) lie on the Cytoplasmic side of the membrane. The chain crosses the membrane as a helical span at residues 418-438 (IPYVAIGVTYLITQISLFWDI). Topologically, residues 439 to 442 (NMLS) are extracellular. A helical membrane pass occupies residues 443–463 (SMITMTFLLTFGFINLSCFLL). Topologically, residues 464 to 480 (RISSTPNFRPTFRYFNR) are cytoplasmic. The chain crosses the membrane as a helical span at residues 481–497 (RTTLVGTILSFGVMFYV). Residues 498–499 (DR) are Extracellular-facing. Residues 500-520 (LNAFISFLIAGILVVVIYFTC) form a helical membrane-spanning segment. Topologically, residues 521–1050 (PPKNWGDVSQ…SKSLTITTAL (530 aa)) are cytoplasmic. Ser901 is subject to Phosphoserine. Residues 915–943 (ETESSFGNRSLSPKQENRRTYSDSTIESS) are disordered. The segment covering 916-928 (TESSFGNRSLSPK) has biased composition (polar residues). Phosphoserine is present on Ser936. Thr939 carries the post-translational modification Phosphothreonine.

The protein belongs to the SLC12A transporter family.

It localises to the membrane. This is an uncharacterized protein from Schizosaccharomyces pombe (strain 972 / ATCC 24843) (Fission yeast).